The chain runs to 114 residues: UPF0212 protein Mbur_0968 (114 aa).

Belongs to the UPF0212 family.

The polypeptide is UPF0212 protein Mbur_0968 (Methanococcoides burtonii (strain DSM 6242 / NBRC 107633 / OCM 468 / ACE-M)).